Reading from the N-terminus, the 443-residue chain is Exodeoxyribonuclease 7 large subunit (443 aa).

It belongs to the XseA family. In terms of assembly, heterooligomer composed of large and small subunits.

The protein resides in the cytoplasm. It carries out the reaction Exonucleolytic cleavage in either 5'- to 3'- or 3'- to 5'-direction to yield nucleoside 5'-phosphates.. In terms of biological role, bidirectionally degrades single-stranded DNA into large acid-insoluble oligonucleotides, which are then degraded further into small acid-soluble oligonucleotides. The sequence is that of Exodeoxyribonuclease 7 large subunit from Stenotrophomonas maltophilia (strain R551-3).